Consider the following 483-residue polypeptide: Lipoamide acyltransferase component of branched-chain alpha-keto acid dehydrogenase complex, mitochondrial (483 aa).

The N-terminal 75 residues, 1–75, are a transit peptide targeting the mitochondrion; sequence MIARRIWRSH…AMATDSNSGL (75 aa). The Lipoyl-binding domain occupies 76–150; it reads IDVPLAQTGE…KVGETLVRLA (75 aa). An N6-lipoyllysine modification is found at lysine 116. Residues 183 to 220 form the Peripheral subunit-binding (PSBD) domain; it reads LSTPAVRNLAKDLGIDINVITGTGKDGRVLKEDVLRFS. Catalysis depends on residues histidine 453 and aspartate 457.

It belongs to the 2-oxoacid dehydrogenase family. As to quaternary structure, forms a 24-polypeptide structural core with octahedral symmetry. Requires (R)-lipoate as cofactor. Expressed in the non-photosynthetic organs such as siliques, flowers and roots.

The protein localises to the mitochondrion matrix. The enzyme catalyses N(6)-[(R)-dihydrolipoyl]-L-lysyl-[protein] + 2-methylpropanoyl-CoA = N(6)-[(R)-S(8)-2-methylpropanoyldihydrolipoyl]-L-lysyl-[protein] + CoA. Its function is as follows. The branched-chain alpha-keto dehydrogenase complex catalyzes the overall conversion of alpha-keto acids to acyl-CoA and CO(2). It contains multiple copies of three enzymatic components: branched-chain alpha-keto acid decarboxylase (E1), lipoamide acyltransferase (E2) and lipoamide dehydrogenase (E3). Within this complex, the catalytic function of this enzyme is to accept, and to transfer to coenzyme A, acyl groups that are generated by the branched-chain alpha-keto acid decarboxylase component. Required during sugar starvation and acts under the control of a sugar-sensing mechanism involving Ser/Thr kinases and phosphatases. This is Lipoamide acyltransferase component of branched-chain alpha-keto acid dehydrogenase complex, mitochondrial (BCE2) from Arabidopsis thaliana (Mouse-ear cress).